The sequence spans 313 residues: Homoserine O-succinyltransferase (313 aa).

Residue cysteine 142 is the Acyl-thioester intermediate of the active site. Residues lysine 163 and serine 192 each contribute to the substrate site. Histidine 235 serves as the catalytic Proton acceptor. Glutamate 237 is a catalytic residue. Substrate is bound at residue arginine 249.

It belongs to the MetA family.

The protein resides in the cytoplasm. It catalyses the reaction L-homoserine + succinyl-CoA = O-succinyl-L-homoserine + CoA. It functions in the pathway amino-acid biosynthesis; L-methionine biosynthesis via de novo pathway; O-succinyl-L-homoserine from L-homoserine: step 1/1. In terms of biological role, transfers a succinyl group from succinyl-CoA to L-homoserine, forming succinyl-L-homoserine. The protein is Homoserine O-succinyltransferase of Vibrio atlanticus (strain LGP32) (Vibrio splendidus (strain Mel32)).